A 276-amino-acid polypeptide reads, in one-letter code: Rhomboid protease GlpG (276 aa).

The next 6 helical transmembrane spans lie at V96–A116, A142–G162, L169–Q189, F192–W212, L229–M249, and A250–V270. The active-site Nucleophile is the S201. H254 is a catalytic residue.

This sequence belongs to the peptidase S54 family.

The protein localises to the cell inner membrane. It carries out the reaction Cleaves type-1 transmembrane domains using a catalytic dyad composed of serine and histidine that are contributed by different transmembrane domains.. In terms of biological role, rhomboid-type serine protease that catalyzes intramembrane proteolysis. The polypeptide is Rhomboid protease GlpG (Citrobacter koseri (strain ATCC BAA-895 / CDC 4225-83 / SGSC4696)).